Consider the following 558-residue polypeptide: Phosphatase and actin regulator 3 (558 aa).

Residues 1–11 (MAASEDGSSCL) are compositionally biased toward polar residues. 3 disordered regions span residues 1–69 (MAAS…KLAT), 81–288 (KKKN…RPLP), and 300–366 (LATK…ENLM). The segment covering 18-33 (QSDPSFLSDSSATSTD) has biased composition (low complexity). T69 is modified (phosphothreonine). The RPEL 1 repeat unit spans residues 92–117 (SALEKKMAGRQGREELIKQGLLEMME). Positions 94-108 (LEKKMAGRQGREELI) are enriched in basic and acidic residues. A compositionally biased stretch (polar residues) spans 144-169 (ETLTSEGAQPGSPSASGTDQVSQDEL). Positions 228–239 (PSPPLLPTPPPK) are enriched in pro residues. Residue S229 is modified to Phosphoserine. T235 is modified (phosphothreonine). Basic and acidic residues-rich tracts occupy residues 300 to 341 (LATK…RDEA) and 354 to 363 (ATKDSEENKE). RPEL repeat units lie at residues 400–425 (ELLA…PRRT), 438–463 (MKLS…KQRN), and 476–501 (QRLT…IRFS). A coiled-coil region spans residues 449–485 (AVEELERRNILKQRNDQTEQEERREIKQRLTRKLNQR).

The protein belongs to the phosphatase and actin regulator family. Binds PPP1CA and actin; thus inhibiting the protein phosphatase 1 (PP1) activity.

The protein resides in the nucleus matrix. This Mus musculus (Mouse) protein is Phosphatase and actin regulator 3 (Phactr3).